The sequence spans 243 residues: Ribosomal RNA small subunit methyltransferase E 2 (243 aa).

Belongs to the RNA methyltransferase RsmE family.

Its subcellular location is the cytoplasm. The enzyme catalyses uridine(1498) in 16S rRNA + S-adenosyl-L-methionine = N(3)-methyluridine(1498) in 16S rRNA + S-adenosyl-L-homocysteine + H(+). Its function is as follows. Specifically methylates the N3 position of the uracil ring of uridine 1498 (m3U1498) in 16S rRNA. Acts on the fully assembled 30S ribosomal subunit. This is Ribosomal RNA small subunit methyltransferase E 2 (rsmE2) from Borreliella burgdorferi (strain ATCC 35210 / DSM 4680 / CIP 102532 / B31) (Borrelia burgdorferi).